Reading from the N-terminus, the 498-residue chain is 3-octaprenyl-4-hydroxybenzoate carboxy-lyase (498 aa).

Residue asparagine 176 coordinates Mn(2+). Prenylated FMN-binding positions include 179–181 (IYR), 193–195 (RWL), and 198–199 (RG). Glutamate 242 is a Mn(2+) binding site. The active-site Proton donor is aspartate 291.

The protein belongs to the UbiD family. As to quaternary structure, homohexamer. Requires prenylated FMN as cofactor. Mn(2+) is required as a cofactor.

Its subcellular location is the cell membrane. The enzyme catalyses a 4-hydroxy-3-(all-trans-polyprenyl)benzoate + H(+) = a 2-(all-trans-polyprenyl)phenol + CO2. The protein operates within cofactor biosynthesis; ubiquinone biosynthesis. In terms of biological role, catalyzes the decarboxylation of 3-octaprenyl-4-hydroxy benzoate to 2-octaprenylphenol, an intermediate step in ubiquinone biosynthesis. The polypeptide is 3-octaprenyl-4-hydroxybenzoate carboxy-lyase (Escherichia coli O6:K15:H31 (strain 536 / UPEC)).